The following is a 101-amino-acid chain: Small ribosomal subunit protein uS14 (101 aa).

Positions 46 to 72 (FELNRQPRDASPVRVRNRDSRDGRPRG) are disordered. A compositionally biased stretch (basic and acidic residues) spans 61–70 (RNRDSRDGRP).

The protein belongs to the universal ribosomal protein uS14 family. Part of the 30S ribosomal subunit. Contacts proteins S3 and S10.

Its function is as follows. Binds 16S rRNA, required for the assembly of 30S particles and may also be responsible for determining the conformation of the 16S rRNA at the A site. This is Small ribosomal subunit protein uS14 from Corynebacterium diphtheriae (strain ATCC 700971 / NCTC 13129 / Biotype gravis).